A 286-amino-acid polypeptide reads, in one-letter code: ATP synthase gamma chain (286 aa).

Belongs to the ATPase gamma chain family. F-type ATPases have 2 components, CF(1) - the catalytic core - and CF(0) - the membrane proton channel. CF(1) has five subunits: alpha(3), beta(3), gamma(1), delta(1), epsilon(1). CF(0) has three main subunits: a, b and c.

It is found in the cell inner membrane. Produces ATP from ADP in the presence of a proton gradient across the membrane. The gamma chain is believed to be important in regulating ATPase activity and the flow of protons through the CF(0) complex. The polypeptide is ATP synthase gamma chain (Shewanella piezotolerans (strain WP3 / JCM 13877)).